Reading from the N-terminus, the 290-residue chain is Ribonuclease HIII (290 aa).

The RNase H type-2 domain maps to 78–290; the sequence is LPLIGTDEVG…FKNTEKAKNA (213 aa). The a divalent metal cation site is built by Asp-84, Glu-85, and Asp-187.

The protein belongs to the RNase HII family. RnhC subfamily. Mn(2+) is required as a cofactor. The cofactor is Mg(2+).

The protein localises to the cytoplasm. The enzyme catalyses Endonucleolytic cleavage to 5'-phosphomonoester.. Functionally, endonuclease that specifically degrades the RNA of RNA-DNA hybrids. The protein is Ribonuclease HIII of Streptococcus pneumoniae (strain CGSP14).